The sequence spans 193 residues: dCTP deaminase (193 aa).

DCTP-binding positions include 110–115, Asp-128, 136–138, Tyr-171, Lys-178, and Gln-182; these read RSSLAR and VLE. Glu-138 acts as the Proton donor/acceptor in catalysis. The interval 169–193 is disordered; the sequence is RPYNRREDAKYRNQQGAVASRIDKD.

This sequence belongs to the dCTP deaminase family. In terms of assembly, homotrimer.

The enzyme catalyses dCTP + H2O + H(+) = dUTP + NH4(+). It participates in pyrimidine metabolism; dUMP biosynthesis; dUMP from dCTP (dUTP route): step 1/2. Functionally, catalyzes the deamination of dCTP to dUTP. The chain is dCTP deaminase from Sodalis glossinidius (strain morsitans).